The following is a 317-amino-acid chain: ADP-L-glycero-D-manno-heptose-6-epimerase (317 aa).

Residues 10–11 (FI), 31–32 (DD), K38, K53, 75–79 (QGACS), and N92 contribute to the NADP(+) site. The active-site Proton acceptor is Y139. K143 contacts NADP(+). A substrate-binding site is contributed by N166. NADP(+) is bound by residues V167 and K175. K175 serves as the catalytic Proton acceptor. Residues G177, H184, 198 to 201 (FEGV), R211, and Y275 each bind substrate.

The protein belongs to the NAD(P)-dependent epimerase/dehydratase family. HldD subfamily. As to quaternary structure, homopentamer. Requires NADP(+) as cofactor.

The catalysed reaction is ADP-D-glycero-beta-D-manno-heptose = ADP-L-glycero-beta-D-manno-heptose. Its pathway is nucleotide-sugar biosynthesis; ADP-L-glycero-beta-D-manno-heptose biosynthesis; ADP-L-glycero-beta-D-manno-heptose from D-glycero-beta-D-manno-heptose 7-phosphate: step 4/4. In terms of biological role, catalyzes the interconversion between ADP-D-glycero-beta-D-manno-heptose and ADP-L-glycero-beta-D-manno-heptose via an epimerization at carbon 6 of the heptose. This chain is ADP-L-glycero-D-manno-heptose-6-epimerase, found in Shewanella piezotolerans (strain WP3 / JCM 13877).